The sequence spans 45 residues: Iota-conotoxin-like R11.10 (45 aa).

4 disulfide bridges follow: Cys5–Cys19, Cys12–Cys22, Cys18–Cys27, and Cys21–Cys36. Residue Leu43 is modified to D-leucine. Arg45 is a propeptide (removed by a carboxypeptidase).

Belongs to the conotoxin I1 superfamily. In terms of tissue distribution, expressed by the venom duct.

It localises to the secreted. Iota-conotoxins bind to voltage-gated sodium channels (Nav) and act as agonists by shifting the voltage-dependence of activation to more hyperpolarized levels. Produces general excitatory symptoms. The protein is Iota-conotoxin-like R11.10 of Conus radiatus (Rayed cone).